We begin with the raw amino-acid sequence, 677 residues long: Methionine--tRNA ligase (677 aa).

Positions 15-25 match the 'HIGH' region motif; that stretch reads PYANGSIHLGH. Positions 146, 149, 159, and 162 each coordinate Zn(2+). The short motif at 333–337 is the 'KMSKS' region element; it reads KMSKS. Residue Lys336 participates in ATP binding. One can recognise a tRNA-binding domain in the interval 575–677; that stretch reads DFAKVDLRVA…AGAKPGHQVK (103 aa).

The protein belongs to the class-I aminoacyl-tRNA synthetase family. MetG type 1 subfamily. In terms of assembly, homodimer. Requires Zn(2+) as cofactor.

It localises to the cytoplasm. It carries out the reaction tRNA(Met) + L-methionine + ATP = L-methionyl-tRNA(Met) + AMP + diphosphate. Its function is as follows. Is required not only for elongation of protein synthesis but also for the initiation of all mRNA translation through initiator tRNA(fMet) aminoacylation. The sequence is that of Methionine--tRNA ligase from Shigella dysenteriae serotype 1 (strain Sd197).